A 397-amino-acid chain; its full sequence is Ribosomal RNA large subunit methyltransferase I (397 aa).

The 79-residue stretch at 2–80 folds into the PUA domain; the sequence is AIRIKLKPGR…KEEAIDADFF (79 aa).

It belongs to the methyltransferase superfamily. RlmI family.

It localises to the cytoplasm. The catalysed reaction is cytidine(1962) in 23S rRNA + S-adenosyl-L-methionine = 5-methylcytidine(1962) in 23S rRNA + S-adenosyl-L-homocysteine + H(+). Functionally, specifically methylates the cytosine at position 1962 (m5C1962) of 23S rRNA. In Shewanella denitrificans (strain OS217 / ATCC BAA-1090 / DSM 15013), this protein is Ribosomal RNA large subunit methyltransferase I.